The primary structure comprises 172 residues: Signal peptidase complex catalytic subunit sec11 (172 aa).

The Cytoplasmic portion of the chain corresponds to M1–Q14. Residues L15–I35 traverse the membrane as a helical; Signal-anchor for type II membrane protein segment. At T36–E172 the chain is on the lumenal side. Residues S49 and H90 each act as charge relay system in the active site. N111 is a glycosylation site (N-linked (GlcNAc...) asparagine). Catalysis depends on D115, which acts as the Charge relay system. Residues V158–L169 form a C-terminal short (CTS) helix region.

Belongs to the peptidase S26B family. In terms of assembly, component of the signal peptidase complex (SPC) composed of a catalytic subunit SEC11 and three accessory subunits SPC1, SPC2 and SPC3. The complex induces a local thinning of the ER membrane which is used to measure the length of the signal peptide (SP) h-region of protein substrates. This ensures the selectivity of the complex towards h-regions shorter than 18-20 amino acids. SPC associates with the translocon complex.

Its subcellular location is the endoplasmic reticulum membrane. It carries out the reaction Cleavage of hydrophobic, N-terminal signal or leader sequences from secreted and periplasmic proteins.. Catalytic component of the signal peptidase complex (SPC) which catalyzes the cleavage of N-terminal signal sequences from nascent proteins as they are translocated into the lumen of the endoplasmic reticulum. Specifically cleaves N-terminal signal peptides that contain a hydrophobic alpha-helix (h-region) shorter than 18-20 amino acids. This Neurospora crassa (strain ATCC 24698 / 74-OR23-1A / CBS 708.71 / DSM 1257 / FGSC 987) protein is Signal peptidase complex catalytic subunit sec11 (sec11).